A 32-amino-acid polypeptide reads, in one-letter code: Cyclotide glopa A (32 aa).

A cross-link (cyclopeptide (Gly-Asn)) is located at residues 1–32; that stretch reads GGSIPCIETCVWTGCFLVPGCSCKSDKKCYLN. 3 cysteine pairs are disulfide-bonded: C6/C21, C10/C23, and C15/C29.

In terms of processing, this is a cyclic peptide.

Its function is as follows. Probably participates in a plant defense mechanism. The chain is Cyclotide glopa A from Gloeospermum pauciflorum.